A 313-amino-acid chain; its full sequence is HTH-type transcriptional regulator CysB (313 aa).

Positions 1–59 (MNLHQFRFVREAVRQNFNLTEAAKALYTSQPGVSKAIIELEDELGVEIFTRHGKRVRSL) constitute an HTH lysR-type domain. Residues 19-38 (LTEAAKALYTSQPGVSKAII) constitute a DNA-binding region (H-T-H motif).

Belongs to the LysR transcriptional regulatory family.

Functionally, transcriptional regulator preferentially involved in the control of sulfate transport and reduction. Binds to DNA at target promoter regions. This is HTH-type transcriptional regulator CysB from Burkholderia cenocepacia (strain ATCC BAA-245 / DSM 16553 / LMG 16656 / NCTC 13227 / J2315 / CF5610) (Burkholderia cepacia (strain J2315)).